Here is a 139-residue protein sequence, read N- to C-terminus: I-Kappa-B like protein N1 (139 aa).

ANK repeat units lie at residues 16 to 48, 54 to 87, and 92 to 122; these read NGEN…QYLL, EGRK…DVNG, and TGDT…NINA.

Belongs to the polydnaviridae I-Kappa-B-like protein family.

Its function is as follows. Suppresses the host immune response through NF-kappa-B inactivation. Possesses ankyrin repeat domain required for NF-kappa-B binding but lack the regulatory regions required for dissociation from NF-kappa-B and degradation. Therefore, prevents host NF-kappa-B release and subsequent activation. In Microplitis demolitor bracovirus (isolate Webb) (MdBV), this protein is I-Kappa-B like protein N1 (N2).